The primary structure comprises 131 residues: Guanyl-specific ribonuclease F1 (131 aa).

A signal peptide spans 1–25 (MLFFKSIASLAALVSLAVASPIESR). A Pyrrolidone carboxylic acid modification is found at glutamine 26. 2 disulfides stabilise this stretch: cysteine 31/cysteine 127 and cysteine 49/cysteine 108. Residue histidine 65 is part of the active site. Glutamate 83 functions as the Proton acceptor in the catalytic mechanism. Residue histidine 116 is the Proton donor of the active site.

The protein belongs to the ribonuclease N1/T1 family.

It catalyses the reaction [RNA] containing guanosine + H2O = an [RNA fragment]-3'-guanosine-3'-phosphate + a 5'-hydroxy-ribonucleotide-3'-[RNA fragment].. This is Guanyl-specific ribonuclease F1 from Fusarium fujikuroi (Bakanae and foot rot disease fungus).